Here is a 103-residue protein sequence, read N- to C-terminus: Large ribosomal subunit protein bL21 (103 aa).

The protein belongs to the bacterial ribosomal protein bL21 family. Part of the 50S ribosomal subunit. Contacts protein L20.

In terms of biological role, this protein binds to 23S rRNA in the presence of protein L20. The sequence is that of Large ribosomal subunit protein bL21 from Borreliella burgdorferi (strain ZS7) (Borrelia burgdorferi).